The sequence spans 427 residues: TNF receptor-associated factor family protein DDB_G0285149 (427 aa).

Residues 20 to 65 form an RING-type zinc finger; sequence CIVCTDLLSESHDKIQVNQCPHGHCLCSDCWTKQIENKKKECPICR. TRAF-type zinc fingers lie at residues 122-178 and 178-234; these read THFK…INKD and DHLE…KHQA. The 132-residue stretch at 284–415 folds into the MATH domain; sequence KYSNQWVIEN…GNKLTIKFEI (132 aa).

It belongs to the TNF receptor-associated factor family. A subfamily.

It localises to the cytoplasm. Functionally, probable adapter protein and signal transducer that links members of the tumor necrosis factor receptor family to different signaling pathways by association with the receptor cytoplasmic domain and kinases. The chain is TNF receptor-associated factor family protein DDB_G0285149 from Dictyostelium discoideum (Social amoeba).